We begin with the raw amino-acid sequence, 479 residues long: Aspartyl/glutamyl-tRNA(Asn/Gln) amidotransferase subunit B (479 aa).

It belongs to the GatB/GatE family. GatB subfamily. In terms of assembly, heterotrimer of A, B and C subunits.

The catalysed reaction is L-glutamyl-tRNA(Gln) + L-glutamine + ATP + H2O = L-glutaminyl-tRNA(Gln) + L-glutamate + ADP + phosphate + H(+). It catalyses the reaction L-aspartyl-tRNA(Asn) + L-glutamine + ATP + H2O = L-asparaginyl-tRNA(Asn) + L-glutamate + ADP + phosphate + 2 H(+). In terms of biological role, allows the formation of correctly charged Asn-tRNA(Asn) or Gln-tRNA(Gln) through the transamidation of misacylated Asp-tRNA(Asn) or Glu-tRNA(Gln) in organisms which lack either or both of asparaginyl-tRNA or glutaminyl-tRNA synthetases. The reaction takes place in the presence of glutamine and ATP through an activated phospho-Asp-tRNA(Asn) or phospho-Glu-tRNA(Gln). The polypeptide is Aspartyl/glutamyl-tRNA(Asn/Gln) amidotransferase subunit B (Clostridium beijerinckii (strain ATCC 51743 / NCIMB 8052) (Clostridium acetobutylicum)).